A 312-amino-acid chain; its full sequence is Phospholipid phosphatase 3 (312 aa).

At 1–33 (MQSYKYDKAIVPESKNGGSPALNNNPRKGGSKR) the chain is on the cytoplasmic side. The residue at position 19 (Ser19) is a Phosphoserine. Residues 34-54 (VLLICLDLFCLFMAALPFLII) traverse the membrane as a helical segment. Residues 55–85 (ETSTIKPYRRGFYCNDESIKYPLKVSETIND) lie on the Extracellular side of the membrane. The chain crosses the membrane as a helical span at residues 86 to 106 (AVLCAVGIVIAILRIITGEFY). Topologically, residues 107-123 (RIYYLKEKSRSTIQNPY) are cytoplasmic. A Dityrosine basolateral targeting motif motif is present at residues 109–110 (YY). Residues 124–144 (VAALYKQVGCFLFGCAISQSF) traverse the membrane as a helical segment. The Extracellular segment spans residues 145-194 (TDIAKVSIGRLRPHFLSVCDPDFSQINCSEGYIQNYRCRGEDSKVQEARK). The phosphatase sequence motif I stretch occupies residues 149–157 (KVSIGRLRP). A glycan (N-linked (GlcNAc...) asparagine) is linked at Asn171. The short motif at 183–185 (RGE) is the Integrin-binding motif element. A helical membrane pass occupies residues 195-215 (SFFSGHASFSMFTMLYLVLYL). The phosphatase sequence motif II stretch occupies residues 197 to 200 (FSGH). His200 serves as the catalytic Proton donors. At 216 to 226 (QARFTWRGARL) the chain is on the cytoplasmic side. A helical transmembrane segment spans residues 227-244 (LRPLLQFTLLMMAFYTGL). The interval 245–256 (SRVSDYKHHPSD) is phosphatase sequence motif III. Topologically, residues 245–258 (SRVSDYKHHPSDVL) are extracellular. His252 (nucleophile) is an active-site residue. The helical transmembrane segment at 259–279 (AGFAQGALVACCIVFFVSDLF) threads the bilayer. Residues 276–312 (SDLFKTKTTLSLPAPAIRREILSPVDIMDRSNHHNMV) form a mediates interaction with CTNND1 region. Residues 280–312 (KTKTTLSLPAPAIRREILSPVDIMDRSNHHNMV) are Cytoplasmic-facing.

Belongs to the PA-phosphatase related phosphoesterase family. As to quaternary structure, forms functional homodimers and homooligomers that are not required for substrate recognition and catalytic activity. Can also form heterooligomers with other PLPP2 and PLPP3. Interacts with CTNND1; negatively regulates the PLPP3-mediated stabilization of beta-catenin/CTNNB1. Post-translationally, N-glycosylated. Contains high-mannose oligosaccharides. As to expression, detected in epithelial cells of intestinal mucosa, lung, liver and brain.

The protein localises to the cell membrane. It is found in the basolateral cell membrane. The protein resides in the endoplasmic reticulum membrane. Its subcellular location is the endoplasmic reticulum-Golgi intermediate compartment membrane. It localises to the golgi apparatus membrane. The protein localises to the golgi apparatus. It is found in the trans-Golgi network membrane. The protein resides in the membrane raft. The catalysed reaction is a 1,2-diacyl-sn-glycero-3-phosphate + H2O = a 1,2-diacyl-sn-glycerol + phosphate. It carries out the reaction 1,2-dihexadecanoyl-sn-glycero-3-phosphate + H2O = 1,2-dihexadecanoyl-sn-glycerol + phosphate. The enzyme catalyses 1,2-di-(9Z-octadecenoyl)-sn-glycero-3-phosphate + H2O = 1,2-di-(9Z-octadecenoyl)-sn-glycerol + phosphate. It catalyses the reaction a monoacyl-sn-glycero-3-phosphate + H2O = a monoacylglycerol + phosphate. The catalysed reaction is (9Z)-octadecenoyl-sn-glycero-3-phosphate + H2O = (9Z-octadecenoyl)-glycerol + phosphate. It carries out the reaction sphing-4-enine 1-phosphate + H2O = sphing-4-enine + phosphate. The enzyme catalyses an N-acylsphing-4-enine 1-phosphate + H2O = an N-acylsphing-4-enine + phosphate. It catalyses the reaction N-(octanoyl)-sphing-4-enine-1-phosphate + H2O = N-octanoylsphing-4-enine + phosphate. The catalysed reaction is N-(9Z-octadecenoyl)-ethanolamine phosphate + H2O = N-(9Z-octadecenoyl) ethanolamine + phosphate. Its pathway is lipid metabolism; phospholipid metabolism. With respect to regulation, magnesium-independent phospholipid phosphatase. Insensitive to N-ethylmaleimide. Inhibited by sphingosine, zinc ions and modestly by propanolol. Functionally, magnesium-independent phospholipid phosphatase of the plasma membrane that catalyzes the dephosphorylation of a variety of glycerolipid and sphingolipid phosphate esters including phosphatidate/PA, lysophosphatidate/LPA, diacylglycerol pyrophosphate/DGPP, sphingosine 1-phosphate/S1P and ceramide 1-phosphate/C1P. Also acts on N-oleoyl ethanolamine phosphate/N-(9Z-octadecenoyl)-ethanolamine phosphate, a potential physiological compound. Has both an extracellular and an intracellular phosphatase activity, allowing the hydrolysis and the cellular uptake of these bioactive lipid mediators from the milieu, regulating signal transduction in different cellular processes. Through the dephosphorylation of extracellular sphingosine-1-phosphate and the regulation of its extra- and intracellular availability, plays a role in vascular homeostasis, regulating endothelial cell migration, adhesion, survival, proliferation and the production of pro-inflammatory cytokines. By maintaining the appropriate levels of this lipid in the cerebellum, also ensure its proper development and function. Through its intracellular lipid phosphatase activity may act in early compartments of the secretory pathway, regulating the formation of Golgi to endoplasmic reticulum retrograde transport carriers. In terms of biological role, independently of this phosphatase activity may also function in the Wnt signaling pathway and the stabilization of beta-catenin/CTNNB1, thereby regulating cell proliferation, migration and differentiation in angiogenesis or yet in tumor growth. Also plays a role in integrin-mediated cell-cell adhesion in angiogenesis. The sequence is that of Phospholipid phosphatase 3 from Rattus norvegicus (Rat).